Reading from the N-terminus, the 199-residue chain is MTKVLGITGGIATGKSTVVALFKKAGYPIVDGDIIAREIVAKGQPALAAIVETFGPEIVLTTGELDRKKLGQLIFASPQKRELLNETLKPFLRKEILRQIEEAKKKAALVIVDIPLLYEAHYEAIMDQVAVVYVPEKIQKERLMARNQLTEEEAQQRIASQWPIEMKKERADIVFDNQGTREETEQQVKKWLEEQIGKK.

A DPCK domain is found at 4-199 (VLGITGGIAT…KWLEEQIGKK (196 aa)). 12–17 (ATGKST) lines the ATP pocket.

It belongs to the CoaE family.

Its subcellular location is the cytoplasm. It catalyses the reaction 3'-dephospho-CoA + ATP = ADP + CoA + H(+). It participates in cofactor biosynthesis; coenzyme A biosynthesis; CoA from (R)-pantothenate: step 5/5. Functionally, catalyzes the phosphorylation of the 3'-hydroxyl group of dephosphocoenzyme A to form coenzyme A. The protein is Dephospho-CoA kinase of Enterococcus faecalis (strain ATCC 700802 / V583).